A 499-amino-acid polypeptide reads, in one-letter code: Probable alpha-L-arabinofuranosidase B (499 aa).

Positions 1–18 (MFSRRNLVALGLAATVSA) are cleaved as a signal peptide. Positions 19–335 (GPCDIYEAGD…ENIVAAKYVS (317 aa)) are catalytic. Disulfide bonds link Cys21–Cys31, Cys81–Cys86, and Cys176–Cys177. Residue Asn83 is glycosylated (N-linked (GlcNAc...) asparagine). Asn202 carries an N-linked (GlcNAc...) asparagine glycan. Asp219 provides a ligand contact to substrate. The active-site Nucleophile is Glu221. Substrate is bound by residues Asn222, Asn223, and Gly296. Asp297 functions as the Proton donor in the catalytic mechanism. The interval 336 to 499 (GSLVSGPSFT…SFEIETAFAS (164 aa)) is ABD. Cys401 and Cys439 form a disulfide bridge. Substrate contacts are provided by His416, Asn418, Phe419, Asp435, His463, Asp465, Leu468, and Asp488.

It belongs to the glycosyl hydrolase 54 family.

It localises to the secreted. The enzyme catalyses Hydrolysis of terminal non-reducing alpha-L-arabinofuranoside residues in alpha-L-arabinosides.. It functions in the pathway glycan metabolism; L-arabinan degradation. Alpha-L-arabinofuranosidase involved in the degradation of arabinoxylan, a major component of plant hemicellulose. Able to hydrolyze 1,5-, 1,3- and 1,2-alpha-linkages not only in L-arabinofuranosyl oligosaccharides, but also in polysaccharides containing terminal non-reducing L-arabinofuranoses in side chains, like L-arabinan, arabinogalactan and arabinoxylan. The polypeptide is Probable alpha-L-arabinofuranosidase B (abfB) (Aspergillus niger (strain ATCC MYA-4892 / CBS 513.88 / FGSC A1513)).